A 283-amino-acid polypeptide reads, in one-letter code: Nicotine 6-hydroxylase medium subunit (283 aa).

The FAD-binding PCMH-type domain occupies 1 to 176 (MKLPAIRYAS…TDVWIPSRPN (176 aa)). Residues 31–35 (AGGQS) and 110–114 (TLGGS) contribute to the FAD site.

Heterotrimer composed of a large subunit (NdhL), a medium subunit (NdhM) and a small subunit (NdhS). The cofactor is FAD.

The protein localises to the cytoplasm. It carries out the reaction (R)-nicotine + A + H2O = (R)-6-hydroxynicotine + AH2. The catalysed reaction is (S)-nicotine + A + H2O = (S)-6-hydroxynicotine + AH2. The protein operates within alkaloid degradation; nicotine degradation; 6-hydroxypseudooxynicotine from nicotine (R-isomer route): step 1/2. It participates in alkaloid degradation; nicotine degradation; 6-hydroxypseudooxynicotine from nicotine (S-isomer route): step 1/2. Nicotine dehydrogenase activity is inhibited by tungsten. Component of the nicotine 6-hydroxylase, which is involved in the degradation of nicotine. Catalyzes the hydroxylation of the pyridine ring at C6 to form 6-hydroxynicotine. Can use both L-nicotine and D-nicotine. In Paenarthrobacter nicotinovorans (Arthrobacter nicotinovorans), this protein is Nicotine 6-hydroxylase medium subunit.